The chain runs to 488 residues: Serine hydroxymethyltransferase, mitochondrial (488 aa).

Residues 1-20 (MAVLRQFVKNSYSSIPKRFY) constitute a mitochondrion transit peptide. The residue at position 265 (K265) is an N6-(pyridoxal phosphate)lysine.

This sequence belongs to the SHMT family. Homotetramer. Requires pyridoxal 5'-phosphate as cofactor.

The protein resides in the mitochondrion. It catalyses the reaction (6R)-5,10-methylene-5,6,7,8-tetrahydrofolate + glycine + H2O = (6S)-5,6,7,8-tetrahydrofolate + L-serine. It functions in the pathway one-carbon metabolism; tetrahydrofolate interconversion. Interconversion of serine and glycine. The polypeptide is Serine hydroxymethyltransferase, mitochondrial (shm2) (Schizosaccharomyces pombe (strain 972 / ATCC 24843) (Fission yeast)).